The following is a 62-amino-acid chain: Temporin-CDYb (62 aa).

The first 22 residues, 1–22, serve as a signal peptide directing secretion; it reads MFTLKKSLLLLFFLGTINLSLC. Positions 23–45 are excised as a propeptide; the sequence is EEERDADEEERRDDPEERAVQVE. L60 bears the Leucine amide mark.

Belongs to the frog skin active peptide (FSAP) family. Temporin subfamily. As to expression, expressed by the skin glands.

The protein resides in the secreted. Its function is as follows. Antimicrobial peptide. Has low activity against the Gram-positive bacterium S.aureus (MIC&gt;100 uM) and the Gram-negative bacterium E.coli (MIC&gt;100 uM). Has weak hemolytic activity against human erythrocytes. The protein is Temporin-CDYb of Rana dybowskii (Dybovsky's frog).